Here is a 336-residue protein sequence, read N- to C-terminus: Di/tripeptide transport system permease protein DppB (336 aa).

Transmembrane regions (helical) follow at residues 10–30 (GLLI…IRLI), 102–122 (LSLA…VIAA), 145–165 (IFWW…WTPV), 198–218 (AVRH…AVIA), 257–277 (LIPV…GAVL), and 307–327 (ILLV…LYGL). The ABC transmembrane type-1 domain occupies 96 to 325 (FPATLELSLA…LVNFVVDILY (230 aa)).

This sequence belongs to the binding-protein-dependent transport system permease family. OppBC subfamily. The complex is composed of two ATP-binding proteins (DppD and DppF), two transmembrane proteins (DppB and DppC) and a solute-binding protein (DppA1-A5). Five orthologous SBPs (DppA1-A5) are present in P.aeruginosa, which increases the substrate specificity of the DppBCDF transporter.

It localises to the cell inner membrane. Its function is as follows. Part of the ABC transporter DppABCDF involved in the uptake of various di/tripeptides. Is also involved in the uptake of phaseolotoxin, a toxic tripeptide inhibiting the enzyme ornithine carbamoyltransferase. Responsible for the translocation of the substrate across the membrane. In Pseudomonas aeruginosa (strain UCBPP-PA14), this protein is Di/tripeptide transport system permease protein DppB.